A 469-amino-acid chain; its full sequence is Ribosomal protein uS12 methylthiotransferase RimO (469 aa).

One can recognise an MTTase N-terminal domain in the interval 1 to 115; the sequence is MKFHIITLGC…IGSVVAGGVA (115 aa). 6 residues coordinate [4Fe-4S] cluster: Cys-10, Cys-46, Cys-78, Cys-180, Cys-184, and Cys-187. Residues 166–398 enclose the Radical SAM core domain; that stretch reads NKRGPSAYLK…MAVQQVISRA (233 aa). Residues 401 to 469 enclose the TRAM domain; that stretch reads ARFVGQTMKV…TDYDLWGEIV (69 aa).

Belongs to the methylthiotransferase family. RimO subfamily. The cofactor is [4Fe-4S] cluster.

It is found in the cytoplasm. It catalyses the reaction L-aspartate(89)-[ribosomal protein uS12]-hydrogen + (sulfur carrier)-SH + AH2 + 2 S-adenosyl-L-methionine = 3-methylsulfanyl-L-aspartate(89)-[ribosomal protein uS12]-hydrogen + (sulfur carrier)-H + 5'-deoxyadenosine + L-methionine + A + S-adenosyl-L-homocysteine + 2 H(+). Its function is as follows. Catalyzes the methylthiolation of an aspartic acid residue of ribosomal protein uS12. This is Ribosomal protein uS12 methylthiotransferase RimO from Herpetosiphon aurantiacus (strain ATCC 23779 / DSM 785 / 114-95).